A 185-amino-acid polypeptide reads, in one-letter code: Elongation factor P (185 aa).

The protein belongs to the elongation factor P family.

It is found in the cytoplasm. The protein operates within protein biosynthesis; polypeptide chain elongation. Its function is as follows. Involved in peptide bond synthesis. Stimulates efficient translation and peptide-bond synthesis on native or reconstituted 70S ribosomes in vitro. Probably functions indirectly by altering the affinity of the ribosome for aminoacyl-tRNA, thus increasing their reactivity as acceptors for peptidyl transferase. The sequence is that of Elongation factor P from Burkholderia vietnamiensis (strain G4 / LMG 22486) (Burkholderia cepacia (strain R1808)).